Reading from the N-terminus, the 621-residue chain is Methionine--tRNA ligase (621 aa).

The 'HIGH' region motif lies at P11–H21. C143, C146, C156, and C159 together coordinate Zn(2+). The 'KMSKS' region motif lies at K347–S351. Residue S350 participates in ATP binding.

This sequence belongs to the class-I aminoacyl-tRNA synthetase family. MetG type 1 subfamily. As to quaternary structure, monomer. Zn(2+) serves as cofactor.

Its subcellular location is the cytoplasm. The catalysed reaction is tRNA(Met) + L-methionine + ATP = L-methionyl-tRNA(Met) + AMP + diphosphate. Is required not only for elongation of protein synthesis but also for the initiation of all mRNA translation through initiator tRNA(fMet) aminoacylation. In Bifidobacterium longum subsp. infantis (strain ATCC 15697 / DSM 20088 / JCM 1222 / NCTC 11817 / S12), this protein is Methionine--tRNA ligase.